Reading from the N-terminus, the 293-residue chain is MDKSTWTTKVGLAQMLKGGVIMDVVTPEQARIAEEAGAVAVMALERVPADIRAQGGVARMSDPELILAIKEAVTIPVMAKARIGHFVEAQILEALGIDYIDESEVLTPADEEHHINKHKFRVPFVCGCRNLGEALRRVAEGAAMLRTKGEAGTGNVVEAVRHARAVYSEIRRLQSMDEDELFTYAKNIQAPYELVRQVAETGRLPVVNFAAGGIATPADAALLMQLGVDGVFVGSGIFKSGDPARRARAIVAATTHYNEPEIIAEVSRGLGEAMVGIEISKIPHDQLMAERGW.

A D-ribose 5-phosphate-binding site is contributed by Asp23. The active-site Schiff-base intermediate with D-ribose 5-phosphate is Lys80. Position 152 (Gly152) interacts with D-ribose 5-phosphate. Position 164 (Arg164) interacts with D-glyceraldehyde 3-phosphate. Residues Gly213 and 234 to 235 (GS) each bind D-ribose 5-phosphate.

This sequence belongs to the PdxS/SNZ family. As to quaternary structure, in the presence of PdxT, forms a dodecamer of heterodimers.

The enzyme catalyses aldehydo-D-ribose 5-phosphate + D-glyceraldehyde 3-phosphate + L-glutamine = pyridoxal 5'-phosphate + L-glutamate + phosphate + 3 H2O + H(+). The protein operates within cofactor biosynthesis; pyridoxal 5'-phosphate biosynthesis. Functionally, catalyzes the formation of pyridoxal 5'-phosphate from ribose 5-phosphate (RBP), glyceraldehyde 3-phosphate (G3P) and ammonia. The ammonia is provided by the PdxT subunit. Can also use ribulose 5-phosphate and dihydroxyacetone phosphate as substrates, resulting from enzyme-catalyzed isomerization of RBP and G3P, respectively. In Roseiflexus sp. (strain RS-1), this protein is Pyridoxal 5'-phosphate synthase subunit PdxS.